Consider the following 398-residue polypeptide: MAGIKIQEDACLVCNACSKACPTEAIEIAPFKTCTLCFSCASACPTGALVENNGKLIYNSSKCIKCGNCATACPTGIKKVDDRFPYSKGHCVLCEKCVDACPIDIISIPGKIDKPEREVTIPQEPIKVTEACVGCSECVPVCPVDAISIEDELAVIDTEKCIYCSVCAQTCPWNAIYVAGKKPSKRQKEIKSFTVTEECIGCEKCVEVCPGDMITYNREDLIVKLPEACPACHLCEQNCPVDAISLEVEYGSAKPVTEEGLVWYEDKCNYCGPCAIKCPLCPTNAINMINQKGLALPSRTKTDKDPEFRMCIRCGACVMKCPTGALKMGKITHEGKEYNRIEFSPALCNECGECVDVCPQDTLKLTGDEKKPLEGYCILCLKCIEACAKTKRNALGLQ.

4Fe-4S ferredoxin-type domains follow at residues 2-31 (AGIK…IAPF), 25-53 (AIEI…VENN), 54-83 (GKLI…VDDR), 82-111 (DRFP…IPGK), 123-152 (QEPI…IEDE), 152-181 (ELAV…VAGK), 191-219 (KSFT…YNRE), 220-249 (DLIV…LEVE), 259-291 (EGLV…MINQ), 300-331 (TKTD…MGKI), and 339-368 (NRIE…LTGD). The [4Fe-4S] cluster site is built by C11, C14, C17, C21, C34, C37, C40, C44, C63, C66, C69, C73, C91, C94, C97, C101, C132, C135, C138, C142, C161, C164, C167, C171, C199, C202, C205, C209, C229, C232, C235, C239, C268, C271, C274, C278, C311, C314, C317, C321, C348, C351, C354, C358, C377, C380, C383, and C387.

Requires [4Fe-4S] cluster as cofactor.

The protein is Polyferredoxin protein VhuB (vhuB) of Methanococcus voltae.